The chain runs to 336 residues: UbiA prenyltransferase domain-containing protein 1 (336 aa).

At Ala2 the chain carries N-acetylalanine. Transmembrane regions (helical) follow at residues 81–101 (LLLGCAVAVLAVHGAGNLVNT), 132–152 (FGVFLYTLGCVCAACLYYLSA), 158–178 (LALIYFGGLSGSFLYTGGIGF), 186–206 (LVILITFGPLAVMFAYAVQVG), 207–227 (SLAIFPLIYAIPLALSTEAIL), 243–265 (IVTLAILIGPTFSYVLYNTLLFV), 275–295 (THCSISLALPLLTIPMAFSLE), and 313–333 (LNLLLGLFYVFGIILAPAGSL).

Belongs to the UbiA prenyltransferase family. Interacts with HMGCR and SOAT1.

The protein localises to the endoplasmic reticulum membrane. It localises to the golgi apparatus membrane. It is found in the mitochondrion membrane. The enzyme catalyses menadiol + (2E,6E,10E)-geranylgeranyl diphosphate = menaquinol-4 + diphosphate. The catalysed reaction is all-trans-decaprenyl diphosphate + 4-hydroxybenzoate = 4-hydroxy-3-(all-trans-decaprenyl)benzoate + diphosphate. Its pathway is quinol/quinone metabolism; menaquinone biosynthesis. The protein operates within cofactor biosynthesis; ubiquinone biosynthesis. In terms of biological role, prenyltransferase that mediates the formation of menaquinone-4 (MK-4) and coenzyme Q10. MK-4 is a vitamin K2 isoform required for endothelial cell development. Mediates the conversion of phylloquinone (PK) into MK-4, probably by cleaving the side chain of phylloquinone (PK) to release 2-methyl-1,4-naphthoquinone (menadione; K3) and then prenylating it with geranylgeranyl pyrophosphate (GGPP) to form MK-4. Also plays a role in cardiovascular development independently of MK-4 biosynthesis, by acting as a coenzyme Q10 biosynthetic enzyme: coenzyme Q10, also named ubiquinone, plays an important antioxidant role in the cardiovascular system. Mediates biosynthesis of coenzyme Q10 in the Golgi membrane, leading to protect cardiovascular tissues from NOS3/eNOS-dependent oxidative stress. This chain is UbiA prenyltransferase domain-containing protein 1 (Ubiad1), found in Mus musculus (Mouse).